The sequence spans 415 residues: M protein, serotype 6 (415 aa).

An N-terminal signal peptide occupies residues 1 to 42; sequence MAKNNTNRHYSLRKLKKGTASVAVALSVIGAGLVVNTNEVSA. Coiled-coil stretches lie at residues 54 to 133 and 170 to 340; these read DKAR…LKKI and EASR…GKAS. 3 repeat units span residues 69–75, 76–82, and 83–89. The 5 X 7 AA approximate tandem repeats of [KMNR]-L-[TQ]-[TDA]-[ENQ]-N-[NDK] stretch occupies residues 69-103; that stretch reads MLQANNDKLTTENKNLTDQNKELKAEENRLTTENK. Positions 75–86 are enriched in polar residues; that stretch reads DKLTTENKNLTD. 4 disordered regions span residues 75-125, 157-189, 202-231, and 247-277; these read DKLT…ESKE, QELAKKDEGNKVSEASRKGLRRDLDASREAKKQ, DKVKEEKQISDASRKGLRRDLDASREAKKQ, and KEEKQISDASRQGLRRDLDASREAKKQVEKA. 3 stretches are compositionally biased toward basic and acidic residues: residues 87-100, 108-125, and 158-189; these read QNKELKAEENRLTT, KLSEAEEEAANKEQESKE, and ELAKKDEGNKVSEASRKGLRRDLDASREAKKQ. Residues 90–96 form a 4; approximate repeat; the sequence is ELKAEEN. The stretch at 97-103 is repeat 5; sequence RLTTENK. C repeat units follow at residues 160 to 194, 202 to 236, and 244 to 278; these read AKKDEGNKVSEASRKGLRRDLDASREAKKQVEKDL, DKVKEEKQISDASRKGLRRDLDASREAKKQVEKDL, and DKVKEEKQISDASRQGLRRDLDASREAKKQVEKAL. The binding to CD46 stretch occupies residues 211-279; the sequence is SDASRKGLRR…AKKQVEKALE (69 aa). Positions 211-279 are two directly repeated 27 amino acid blocks separated by 15 amino acids; that stretch reads SDASRKGLRR…AKKQVEKALE (69 aa). Positions 260–277 are enriched in basic and acidic residues; that stretch reads LRRDLDASREAKKQVEKA. The interval 280–343 is hydrophilic; sequence EANSKLAALE…LRAGKASDSQ (64 aa). 4 D repeats span residues 311–316, 317–322, 325–330, and 332–337; these read AKLEAE, AKALKE, AKQAEE, and AKLRAG. The segment at 332-387 is disordered; sequence AKLRAGKASDSQTPDAKPGNKVVPGKGQAPQAGTKPNQNKAPMKETKRQLPSTGET. An LPXTG sorting signal motif is present at residues 381–385; it reads LPSTG. The residue at position 384 (Thr384) is a Pentaglycyl murein peptidoglycan amidated threonine. A propeptide spans 385 to 415 (removed by sortase); it reads GETANPFFTAAALTVMATAGVAAVVKRKEEN.

This sequence belongs to the M protein family.

Its subcellular location is the secreted. The protein localises to the cell wall. Mediates the attachment of S.pyogenes to skin epithelial cells through the binding of the human membrane cofactor protein CD46. Also binds to the factor H and factor H-like protein 1. These interactions could contribute to the fact that the M6 protein protects the bacterium from the phagocytosis by regulating the complement activation on the bacterial surface. This chain is M protein, serotype 6 (emm6), found in Streptococcus pyogenes serotype M6 (strain ATCC BAA-946 / MGAS10394).